Here is a 357-residue protein sequence, read N- to C-terminus: Peptide chain release factor 1 (357 aa).

Residue Gln234 is modified to N5-methylglutamine.

Belongs to the prokaryotic/mitochondrial release factor family. Methylated by PrmC. Methylation increases the termination efficiency of RF1.

Its subcellular location is the cytoplasm. Peptide chain release factor 1 directs the termination of translation in response to the peptide chain termination codons UAG and UAA. The polypeptide is Peptide chain release factor 1 (Chlorobaculum tepidum (strain ATCC 49652 / DSM 12025 / NBRC 103806 / TLS) (Chlorobium tepidum)).